The sequence spans 550 residues: Arginine--tRNA ligase (550 aa).

A 'HIGH' region motif is present at residues 123-133 (ANPTGYLHIAH).

The protein belongs to the class-I aminoacyl-tRNA synthetase family. In terms of assembly, monomer.

Its subcellular location is the cytoplasm. The enzyme catalyses tRNA(Arg) + L-arginine + ATP = L-arginyl-tRNA(Arg) + AMP + diphosphate. The polypeptide is Arginine--tRNA ligase (Ureaplasma parvum serovar 3 (strain ATCC 27815 / 27 / NCTC 11736)).